The primary structure comprises 427 residues: MTEAMKITLSTQPADARWGEKATYSINNDGITLHLNGADDLGLIQRAARKIDGLGIKHVQLSGEGWDADRCWAFWQGYKAPKGTRKVEWPDLDDAQRQELDNRLMIIDWVRDTINAPAEELGPSQLAQRAVDLISNVAGDRVTYRITKGEDLREQGYMGLHTVGRGSERSPVLLALDYNPTGDKEAPVYACLVGKGITFDSGGYSIKQTAFMDSMKSDMGGAATVTGALAFAITRGLNKRVKLFLCCADNLISGNAFKLGDIITYRNGKKVEVMNTDAEGRLVLADGLIDASAQKPEMIIDAATLTGAAKTALGNDYHALFSFDDALAGRLLASAAQENEPFWRLPLAEFHRSQLPSNFAELNNTGSAAYPAGASTAAGFLSHFVENYQQGWLHIDCSATYRKAPVEQWSAGATGLGVRTIANLLTA.

2 residues coordinate Mn(2+): Lys-195 and Asp-200. The active site involves Lys-207. The Mn(2+) site is built by Asp-218, Asp-277, and Glu-279. Arg-281 is an active-site residue.

Belongs to the peptidase M17 family. In terms of assembly, homohexamer. Requires Mn(2+) as cofactor.

Its subcellular location is the cytoplasm. It catalyses the reaction Release of an N-terminal amino acid, Xaa, from a peptide or arylamide. Xaa is preferably Glu or Asp but may be other amino acids, including Leu, Met, His, Cys and Gln.. In terms of biological role, probably plays an important role in intracellular peptide degradation. This Escherichia coli (strain ATCC 8739 / DSM 1576 / NBRC 3972 / NCIMB 8545 / WDCM 00012 / Crooks) protein is Peptidase B.